A 121-amino-acid polypeptide reads, in one-letter code: Protein TCL1B5 (121 aa).

The protein belongs to the TCL1 family.

The polypeptide is Protein TCL1B5 (Tcl1b5) (Mus musculus (Mouse)).